The chain runs to 78 residues: Large ribosomal subunit protein bL28 (78 aa).

The protein belongs to the bacterial ribosomal protein bL28 family.

The polypeptide is Large ribosomal subunit protein bL28 (Proteus mirabilis (strain HI4320)).